Consider the following 161-residue polypeptide: SsrA-binding protein (161 aa).

Residues 139 to 153 (RESIKRKEENRELDR) are compositionally biased toward basic and acidic residues. Positions 139-161 (RESIKRKEENRELDRLRKRRRQE) are disordered.

It belongs to the SmpB family.

The protein resides in the cytoplasm. Its function is as follows. Required for rescue of stalled ribosomes mediated by trans-translation. Binds to transfer-messenger RNA (tmRNA), required for stable association of tmRNA with ribosomes. tmRNA and SmpB together mimic tRNA shape, replacing the anticodon stem-loop with SmpB. tmRNA is encoded by the ssrA gene; the 2 termini fold to resemble tRNA(Ala) and it encodes a 'tag peptide', a short internal open reading frame. During trans-translation Ala-aminoacylated tmRNA acts like a tRNA, entering the A-site of stalled ribosomes, displacing the stalled mRNA. The ribosome then switches to translate the ORF on the tmRNA; the nascent peptide is terminated with the 'tag peptide' encoded by the tmRNA and targeted for degradation. The ribosome is freed to recommence translation, which seems to be the essential function of trans-translation. This is SsrA-binding protein from Syntrophobacter fumaroxidans (strain DSM 10017 / MPOB).